The primary structure comprises 1247 residues: SAM and SH3 domain-containing protein 1 (1247 aa).

The tract at residues 1-39 is disordered; the sequence is MEDAGAAGPGPEPEPEPEPEPEPAPEPEPEPKPGAGTSE. Residues 13-28 are compositionally biased toward acidic residues; the sequence is PEPEPEPEPEPAPEPE. Ser90 bears the Phosphoserine mark. 3 disordered regions span residues 126–145, 221–257, and 316–344; these read VERK…VGKG, AALD…ESVK, and FFDG…LDTW. Ser248 is modified (phosphoserine). The span at 331 to 343 shows a compositional bias: low complexity; the sequence is SLTTSPSSSSLDT. Position 407 is a phosphoserine (Ser407). Residues 449–573 are disordered; it reads SLGKKVKSVK…DFTPSPYDTD (125 aa). Low complexity-rich tracts occupy residues 468–484 and 505–523; these read KYSS…DGMP and GGSV…SMSG. The span at 524 to 536 shows a compositional bias: polar residues; it reads QTVSTTDSSTSNR. The SH3 domain occupies 554–615; sequence PFCGRARVHT…KFIYVDVLSE (62 aa). Ser614 carries the post-translational modification Phosphoserine. Disordered regions lie at residues 616–639 and 713–810; these read DEEK…KSVE and DSQG…LNKN. Residues 622–631 show a composition bias toward basic residues; sequence RPTRRRRKGR. Positions 633–697 constitute an SAM 1 domain; sequence PQPKSVEDLL…LTAVELLQEY (65 aa). Residues 746-765 show a composition bias toward polar residues; the sequence is SAKSSTEPSLKSFSRNQLGN. A phosphoserine mark is found at Ser821 and Ser839. Disordered stretches follow at residues 846–884, 903–946, and 971–1065; these read EPGA…PLEQ, PQKL…LART, and DAEQ…SELP. The tract at residues 852 to 860 is required for interaction with TRAF6; the sequence is DVPTEVTEP. Phosphothreonine is present on Thr858. The segment covering 1050 to 1060 has biased composition (pro residues); sequence GSPPSTRPPPW. The 65-residue stretch at 1177–1241 folds into the SAM 2 domain; sequence GCISSVSDWL…LSAARLFKLP (65 aa).

In terms of assembly, interacts with GNAS. Interacts with IQGAP1. Interacts with TRAF6 (via C-terminus); the interaction is LPS-dependent. Interacts with MAP3K7, CHUK and IKBKB. As to expression, expressed ubiquitously, with highest levels in lung, placenta, spleen and thymus. Down-regulated in the majority (74%) of breast tumors in comparison with corresponding normal breast epithelial tissues. Expressed in the epidermis, epidermal keratinocytes, dermal fibroblasts and melanocytes.

It is found in the cytoplasm. Its function is as follows. Is a positive regulator of NF-kappa-B signaling downstream of TLR4 activation. It acts as a scaffold molecule to assemble a molecular complex that includes TRAF6, MAP3K7, CHUK and IKBKB, thereby facilitating NF-kappa-B signaling activation. Regulates TRAF6 and MAP3K7 ubiquitination. Involved in the regulation of cell mobility. Regulates lipolysaccharide (LPS)-induced endothelial cell migration. Is involved in the regulation of skin pigmentation through the control of melanocyte migration in the epidermis. This chain is SAM and SH3 domain-containing protein 1 (SASH1), found in Homo sapiens (Human).